A 575-amino-acid polypeptide reads, in one-letter code: Amino-acid acetyltransferase, mitochondrial (575 aa).

The N-terminal 35 residues, 1–35 (MSKLRNLNRQFISNLKTHETVTNAKRNLILSILKS), are a transit peptide targeting the mitochondrion. Residues 398 to 557 (FTLNNLVQDG…QGIPGGVNIH (160 aa)) form the N-acetyltransferase domain.

Belongs to the acetyltransferase family.

The protein resides in the mitochondrion. The enzyme catalyses L-glutamate + acetyl-CoA = N-acetyl-L-glutamate + CoA + H(+). It participates in amino-acid biosynthesis; L-arginine biosynthesis; N(2)-acetyl-L-ornithine from L-glutamate: step 1/4. In terms of biological role, N-acetylglutamate synthase involved in arginine biosynthesis. The chain is Amino-acid acetyltransferase, mitochondrial (ARG2) from Debaryomyces hansenii (strain ATCC 36239 / CBS 767 / BCRC 21394 / JCM 1990 / NBRC 0083 / IGC 2968) (Yeast).